The chain runs to 812 residues: Eukaryotic translation initiation factor 3 subunit C (812 aa).

The interval 1–110 is disordered; that stretch reads MSRFFSSNYE…EESDEEDGKK (110 aa). 2 stretches are compositionally biased toward acidic residues: residues 18–30 and 38–64; these read SEED…EEDL and SELD…DSDD. Residues Ser98, Ser99, and Ser103 each carry the phosphoserine modification. One can recognise a PCI domain in the interval 608–783; it reads YHQHINLDLI…TIFVVEKGDE (176 aa).

It belongs to the eIF-3 subunit C family. In terms of assembly, the eukaryotic translation initiation factor 3 (eIF-3) core complex is composed of TIF32, PRT1, NIP1, TIF34 and TIF35. A subcomplex of TIF32, NIP1 and PRT1 mediates the interaction with eIF-1, TIF5/eIF-5 and HCR1. The factors eIF-1, eIF-2, eIF-3, TIF5/eIF-5 and methionyl-tRNAi form a multifactor complex (MFC) that may bind to the 40S ribosome. TIF32, NIP1 and TIF5/eIF-5 comprise a minimal 40S-ribosome-binding unit. NIP1 interacts with TIF5/eIF-5 and SUI1.

It is found in the cytoplasm. Functionally, component of the eukaryotic translation initiation factor 3 (eIF-3) complex, which is involved in protein synthesis of a specialized repertoire of mRNAs and, together with other initiation factors, stimulates binding of mRNA and methionyl-tRNAi to the 40S ribosome. The eIF-3 complex specifically targets and initiates translation of a subset of mRNAs involved in cell proliferation. This chain is Eukaryotic translation initiation factor 3 subunit C, found in Saccharomyces cerevisiae (strain ATCC 204508 / S288c) (Baker's yeast).